The following is a 249-amino-acid chain: uncharacterized protein (249 aa).

The first 25 residues, 1–25, serve as a signal peptide directing secretion; it reads MRYLNTKNIIAAGVLLSCMSSIAWG.

Belongs to the periplasmic pilus chaperone family.

It localises to the periplasm. In terms of biological role, could be required for the biogenesis of a putative fimbria. This is an uncharacterized protein from Escherichia coli (strain K12).